The following is a 167-amino-acid chain: Aphrodisin (167 aa).

A signal peptide spans 1–16 (MVKILVLALVFSLAHA). Residue Gln-17 is modified to Pyrrolidone carboxylic acid. Intrachain disulfides connect Cys-54–Cys-58 and Cys-73–Cys-165. N-linked (GlcNAc...) asparagine glycosylation is found at Asn-57 and Asn-85.

It belongs to the calycin superfamily. Lipocalin family. In terms of tissue distribution, expressed in the vagina, uterus, and Bartholin's glands of female hamsters. Secreted in vaginal discharge.

It is found in the secreted. Functionally, acts as an aphrodisiac pheromone, reliably eliciting copulatory behavior from male hamster. This chain is Aphrodisin, found in Mesocricetus auratus (Golden hamster).